A 169-amino-acid chain; its full sequence is Transmembrane protein B169L (169 aa).

Transmembrane regions (helical) follow at residues 28-48 and 60-80; these read NPFI…FAIC and TAIY…YVLN. N-linked (GlcNAc...) asparagine; by host glycosylation is present at Asn-88. The interval 107 to 169 is disordered; it reads DEIIPPISPP…EVIMPSQYNN (63 aa). Residues 140 to 154 are compositionally biased toward low complexity; the sequence is KPADSKPASSADSKP.

It belongs to the asfivirus B169L family.

The protein resides in the host membrane. Its subcellular location is the virion. This is Transmembrane protein B169L from Ornithodoros (relapsing fever ticks).